We begin with the raw amino-acid sequence, 726 residues long: Catalase-peroxidase (726 aa).

Residues 1 to 33 (MSTSDDIHNTTATGKCPFHQGGHDQSAGGGTTT) form a disordered region. Positions 105–226 (WHGAGTYRSI…LGATEMGLIY (122 aa)) form a cross-link, tryptophyl-tyrosyl-methioninium (Trp-Tyr) (with M-252). His-106 (proton acceptor) is an active-site residue. Positions 226–252 (YVNPEGPDHSGEPLSAAAAIRATFGNM) form a cross-link, tryptophyl-tyrosyl-methioninium (Tyr-Met) (with W-105). Residue His-267 participates in heme b binding.

Belongs to the peroxidase family. Peroxidase/catalase subfamily. As to quaternary structure, homodimer or homotetramer. Heme b serves as cofactor. Formation of the three residue Trp-Tyr-Met cross-link is important for the catalase, but not the peroxidase activity of the enzyme.

It carries out the reaction H2O2 + AH2 = A + 2 H2O. The enzyme catalyses 2 H2O2 = O2 + 2 H2O. Its function is as follows. Bifunctional enzyme with both catalase and broad-spectrum peroxidase activity. The chain is Catalase-peroxidase from Escherichia coli O1:K1 / APEC.